Consider the following 1188-residue polypeptide: DNA-directed RNA polymerase subunit beta (1188 aa).

This sequence belongs to the RNA polymerase beta chain family. In terms of assembly, the RNAP catalytic core consists of 2 alpha, 1 beta, 1 beta' and 1 omega subunit. When a sigma factor is associated with the core the holoenzyme is formed, which can initiate transcription.

It carries out the reaction RNA(n) + a ribonucleoside 5'-triphosphate = RNA(n+1) + diphosphate. Its function is as follows. DNA-dependent RNA polymerase catalyzes the transcription of DNA into RNA using the four ribonucleoside triphosphates as substrates. In Streptococcus gordonii (strain Challis / ATCC 35105 / BCRC 15272 / CH1 / DL1 / V288), this protein is DNA-directed RNA polymerase subunit beta.